Reading from the N-terminus, the 265-residue chain is Indole-3-glycerol phosphate synthase (265 aa).

It belongs to the TrpC family.

The enzyme catalyses 1-(2-carboxyphenylamino)-1-deoxy-D-ribulose 5-phosphate + H(+) = (1S,2R)-1-C-(indol-3-yl)glycerol 3-phosphate + CO2 + H2O. It functions in the pathway amino-acid biosynthesis; L-tryptophan biosynthesis; L-tryptophan from chorismate: step 4/5. This chain is Indole-3-glycerol phosphate synthase, found in Xanthomonas campestris pv. campestris (strain 8004).